Here is a 401-residue protein sequence, read N- to C-terminus: Acetate kinase (401 aa).

Asparagine 7 contributes to the Mg(2+) binding site. Position 14 (lysine 14) interacts with ATP. Arginine 90 provides a ligand contact to substrate. Catalysis depends on aspartate 147, which acts as the Proton donor/acceptor. ATP is bound by residues 207–211 (HLGNG), 282–284 (DFR), and 330–334 (GVGEN). Position 383 (glutamate 383) interacts with Mg(2+).

This sequence belongs to the acetokinase family. Homodimer. Mg(2+) serves as cofactor. It depends on Mn(2+) as a cofactor.

Its subcellular location is the cytoplasm. The catalysed reaction is acetate + ATP = acetyl phosphate + ADP. The protein operates within metabolic intermediate biosynthesis; acetyl-CoA biosynthesis; acetyl-CoA from acetate: step 1/2. Functionally, catalyzes the formation of acetyl phosphate from acetate and ATP. Can also catalyze the reverse reaction. The chain is Acetate kinase from Clostridium novyi (strain NT).